The chain runs to 527 residues: MSDLLSRRLALLGAAANLPLLTECLHGIERECLRVDSDGKLALTPHPRALGSTLTHPQITTDYSEALLEFITPTETDVADTLGDLERIHRFASSKLDGEYLWSPSMPCELPDEESIPIARYGSSMIGRLKYVYRKGLALRYGKTMQCIAGIHYNFSLPERLWPLLRQAEGSELSERDYQSAAYIALIRNFRRYSWLLMYLFGASPALDAGFLRGRPSQLERLDEHTLYLPYATSLRMSDLGYQNNAQAGLTPCYNDLQSYIDSLRQAVSTPYPPYEKVGTKQDGEWVQLNTNILQIENEYYSSIRPKRVTYTGERPVQALAARGVQYVEVRCLDINPFLPLGIDLDEARFLDAFLLFCAFSDSPLLNGECSDATDNFLAVVKEGRRPGLQLQRRGQPVELQVWANELLERIADTAALLDRARGGEAHAAALAAQRAKVADAELTPSAQVLKVMRERGESFEAFSLRQSREHAEYFRQHPLAAEEQARFEKMASDSLAEQTELERDQDGDFDTFVAAYQASILGLISN.

It belongs to the glutamate--cysteine ligase type 1 family. Type 1 subfamily.

The catalysed reaction is L-cysteine + L-glutamate + ATP = gamma-L-glutamyl-L-cysteine + ADP + phosphate + H(+). The protein operates within sulfur metabolism; glutathione biosynthesis; glutathione from L-cysteine and L-glutamate: step 1/2. This Pseudomonas aeruginosa (strain ATCC 15692 / DSM 22644 / CIP 104116 / JCM 14847 / LMG 12228 / 1C / PRS 101 / PAO1) protein is Glutamate--cysteine ligase.